The primary structure comprises 155 residues: Ribosomal RNA large subunit methyltransferase H (155 aa).

Residues leucine 72, glycine 103, and 122 to 127 (LSDLTL) each bind S-adenosyl-L-methionine.

Belongs to the RNA methyltransferase RlmH family. Homodimer.

Its subcellular location is the cytoplasm. It carries out the reaction pseudouridine(1915) in 23S rRNA + S-adenosyl-L-methionine = N(3)-methylpseudouridine(1915) in 23S rRNA + S-adenosyl-L-homocysteine + H(+). In terms of biological role, specifically methylates the pseudouridine at position 1915 (m3Psi1915) in 23S rRNA. The sequence is that of Ribosomal RNA large subunit methyltransferase H from Verminephrobacter eiseniae (strain EF01-2).